A 71-amino-acid polypeptide reads, in one-letter code: Protein CYSTEINE-RICH TRANSMEMBRANE MODULE 3 (71 aa).

The tract at residues 30-49 (VMMKDSPQTVQPPHEGQSKG) is disordered. A helical membrane pass occupies residues 48-64 (KGSGGFLRGCLAAMCCC).

The protein belongs to the CYSTM1 family. As to quaternary structure, heterodimers. Interacts with CYSTM7 and WIH1/CYSTM13. Mostly expressed in leaves and flowers and, to a lower extent, in stems, siliques, shoots and roots.

Its subcellular location is the cell membrane. The protein resides in the cytoplasm. It is found in the mitochondrion. Functionally, negatively regulates salt stress responses and Na(+) homeostasis. Prevents Na(+) efflux, disturbs reactive oxygen species (ROS) homeostasis, and represses the expression of nuclear salt stress-responsive genes. Involved in resistance to abiotic stress. The chain is Protein CYSTEINE-RICH TRANSMEMBRANE MODULE 3 from Arabidopsis thaliana (Mouse-ear cress).